A 218-amino-acid chain; its full sequence is Response regulator UvrY (218 aa).

Residues 3-119 (NVLLVDDHEL…EVVSAIRSVY (117 aa)) enclose the Response regulatory domain. Asp-54 carries the 4-aspartylphosphate modification. An HTH luxR-type domain is found at 143–208 (TESPFASLSE…ELTHLAIRHG (66 aa)). A DNA-binding region (H-T-H motif) is located at residues 167–186 (VNEISEQLNLSPKTVNSYRY).

Phosphorylated and activated by BarA.

The protein resides in the cytoplasm. In terms of biological role, member of the two-component regulatory system UvrY/BarA involved in the regulation of carbon metabolism via the CsrA/CsrB regulatory system. UvrY activates the transcription of the untranslated csrB RNA and of barA, in an autoregulatory loop. Mediates the effects of CsrA on csrB RNA by BarA-dependent and BarA-independent mechanisms. This Escherichia coli O157:H7 protein is Response regulator UvrY (uvrY).